The primary structure comprises 258 residues: Probable parvulin-type peptidyl-prolyl cis-trans isomerase (258 aa).

The signal sequence occupies residues 1 to 19 (MKRIAMLAAACVIAVPAFA). Residues 127–219 (KMEYKVRHIL…FGWHVIQVDD (93 aa)) enclose the PpiC domain.

This sequence belongs to the PpiC/parvulin rotamase family.

The enzyme catalyses [protein]-peptidylproline (omega=180) = [protein]-peptidylproline (omega=0). The sequence is that of Probable parvulin-type peptidyl-prolyl cis-trans isomerase from Bordetella parapertussis (strain 12822 / ATCC BAA-587 / NCTC 13253).